The following is an 86-amino-acid chain: ATP synthase subunit c (86 aa).

A run of 2 helical transmembrane segments spans residues 4–24 (AIVAAASAIGAGIAVATGIGA) and 57–77 (VAIAESSAIYGLVISIILLFV).

The protein belongs to the ATPase C chain family. F-type ATPases have 2 components, F(1) - the catalytic core - and F(0) - the membrane proton channel. F(1) has five subunits: alpha(3), beta(3), gamma(1), delta(1), epsilon(1). F(0) has three main subunits: a(1), b(2) and c(10-14). The alpha and beta chains form an alternating ring which encloses part of the gamma chain. F(1) is attached to F(0) by a central stalk formed by the gamma and epsilon chains, while a peripheral stalk is formed by the delta and b chains.

The protein resides in the cell membrane. Its function is as follows. F(1)F(0) ATP synthase produces ATP from ADP in the presence of a proton or sodium gradient. F-type ATPases consist of two structural domains, F(1) containing the extramembraneous catalytic core and F(0) containing the membrane proton channel, linked together by a central stalk and a peripheral stalk. During catalysis, ATP synthesis in the catalytic domain of F(1) is coupled via a rotary mechanism of the central stalk subunits to proton translocation. In terms of biological role, key component of the F(0) channel; it plays a direct role in translocation across the membrane. A homomeric c-ring of between 10-14 subunits forms the central stalk rotor element with the F(1) delta and epsilon subunits. The polypeptide is ATP synthase subunit c (Clostridioides difficile (strain 630) (Peptoclostridium difficile)).